A 529-amino-acid chain; its full sequence is Nuclear distribution protein PAC1 (529 aa).

Residues 68–89 (RLQHKIIDLEGEVSNLRTVIDS) are a coiled coil. 7 WD repeats span residues 120–159 (QSHQ…SLIP), 165–218 (AHIR…HIRT), 221–261 (GHEH…CIKT), 264–318 (GHSD…GLSL), 321–395 (GHTH…FRPH), 416–455 (GHQS…VNGR), and 496–529 (TEED…RLWS).

It belongs to the WD repeat LIS1/nudF family. As to quaternary structure, self-associates. Interacts with NDL1 and dynein.

The protein localises to the cytoplasm. Its subcellular location is the cytoskeleton. The protein resides in the spindle pole. Its function is as follows. Positively regulates the activity of the minus-end directed microtubule motor protein dynein. Plays a central role in positioning the mitotic spindle at the bud neck during cell division. Targets cytoplasmic dynein to microtubule plus ends, thereby promoting dynein-mediated microtubule sliding along the bud cortex and consequently the movement of the mitotic spindle to the bud neck. The protein is Nuclear distribution protein PAC1 of Debaryomyces hansenii (strain ATCC 36239 / CBS 767 / BCRC 21394 / JCM 1990 / NBRC 0083 / IGC 2968) (Yeast).